Consider the following 345-residue polypeptide: Sorting nexin-15 (345 aa).

The 130-residue stretch at 1–130 folds into the PX domain; the sequence is MSRQAKDDFL…EFFRGGEVTR (130 aa). Arg-105 bears the Omega-N-methylarginine mark. The segment at 133 to 163 is disordered; it reads EVSGDLHILPPPLIPTPPPDEPRVQPHETWL. Residues 141–151 are compositionally biased toward pro residues; the sequence is LPPPLIPTPPP. 2 positions are modified to phosphoserine: Ser-208 and Ser-234. The interval 226 to 274 is disordered; it reads SKEEGAGPSPTHIGELAALEAGSGRPDQEPWEPGGQAEEDDEEGEPAPA. The MIT domain occupies 272–345; sequence APAYLSQATE…AEEILHLHLS (74 aa).

This sequence belongs to the sorting nexin family.

Its function is as follows. May be involved in several stages of intracellular trafficking. Overexpression of SNX15 disrupts the normal trafficking of proteins from the plasma membrane to recycling endosomes or the TGN. The protein is Sorting nexin-15 (SNX15) of Bos taurus (Bovine).